The following is a 2523-amino-acid chain: Non-reducing polyketide synthase Preu3 (2523 aa).

An N-terminal acylcarrier protein transacylase domain (SAT) region spans residues 58 to 247; sequence LQSLASERRA…KILAMTGSFH (190 aa). One can recognise a Ketosynthase family 3 (KS3) domain in the interval 373–792; it reads DNAVAVVGMA…GSNGAMIVCQ (420 aa). Catalysis depends on for beta-ketoacyl synthase activity residues cysteine 539, histidine 674, and histidine 715. Residues 900–1207 are malonyl-CoA:ACP transacylase (MAT) domain; that stretch reads CFGGQVKAFV…KAFGSLADAT (308 aa). Catalysis depends on serine 986, which acts as the For acyl/malonyl transferase activity. The interval 1271-1398 is N-terminal hotdog fold; the sequence is HELLTFSSFE…GLVAFGGTVE (128 aa). In terms of domain architecture, PKS/mFAS DH spans 1271 to 1573; sequence HELLTFSSFE…FTRVTVPGLR (303 aa). The tract at residues 1301–1568 is product template (PT) domain; that stretch reads LVKGHAVVAQ…ALGCRFTRVT (268 aa). The active-site Proton acceptor; for dehydratase activity is the histidine 1305. The tract at residues 1421–1573 is C-terminal hotdog fold; the sequence is ECDALRGSAT…FTRVTVPGLR (153 aa). Catalysis depends on aspartate 1483, which acts as the Proton donor; for dehydratase activity. The segment at 1579-1601 is disordered; the sequence is ANGDARAQERPSGSRISPSPLAP. Positions 1639-1713 constitute a Carrier domain; that stretch reads VDYLAQVKAL…KLAEYLAKTL (75 aa). O-(pantetheine 4'-phosphoryl)serine is present on serine 1673. The tract at residues 1735-1757 is disordered; that stretch reads DAEQSSDESPYDSTDDSASGYGD. The segment covering 1738–1749 has biased composition (acidic residues); sequence QSSDESPYDSTD. A methyltransferase (CMeT) domain region spans residues 1986–2085; the sequence is LEIGGGTGGT…MRQLLSSEGF (100 aa). The thioesterase (TE) domain stretch occupies residues 2218–2520; it reads LILHGGGHVL…RALEWLVEQC (303 aa).

It depends on pantetheine 4'-phosphate as a cofactor.

It carries out the reaction 3 malonyl-CoA + acetyl-CoA + S-adenosyl-L-methionine + H(+) = 3-methylorsellinate + S-adenosyl-L-homocysteine + 3 CO2 + 4 CoA. Functionally, non-reducing polyketide synthase; part of a gene cluster that mediates the biosynthesis of a yet unidentified natural product. The first step in the pathway is performed by Preu3 that condenses one acetyl-CoA starter unit with 3 malonyl-CoA units. Preu3 also catalyzes one methylation step to produce 3-methylorsellinate, an intermediate that exhibits significant antibacterial activities against methicillin-resistant Staphylococcus aureus, multidrug-resistant Enterococcus faecalis, multidrug-resistant Enterococcus faecium, and multidrug-resistant Staphylococcus epidermidis. In Preussia isomera (Coprophilous fungus), this protein is Non-reducing polyketide synthase Preu3.